A 299-amino-acid polypeptide reads, in one-letter code: Non-homologous end joining protein Ku (299 aa).

In terms of domain architecture, Ku spans 10 to 188 (ISFGLVHIPV…TEAVTDARLT (179 aa)). 2 disordered regions span residues 227–249 (AGEG…SADV) and 261–299 (AGKS…GKAS). Residues 273-283 (AAKDKVADKQS) show a composition bias toward basic and acidic residues. The segment covering 284–299 (PKPKRPAVRKKTGKAS) has biased composition (basic residues).

Belongs to the prokaryotic Ku family. As to quaternary structure, homodimer. Interacts with LigD.

Functionally, with LigD forms a non-homologous end joining (NHEJ) DNA repair enzyme, which repairs dsDNA breaks with reduced fidelity. Binds linear dsDNA with 5'- and 3'- overhangs but not closed circular dsDNA nor ssDNA. Recruits and stimulates the ligase activity of LigD. The protein is Non-homologous end joining protein Ku of Pseudomonas syringae pv. tomato (strain ATCC BAA-871 / DC3000).